A 345-amino-acid polypeptide reads, in one-letter code: S-adenosylmethionine:tRNA ribosyltransferase-isomerase (345 aa).

It belongs to the QueA family. Monomer.

The protein localises to the cytoplasm. It catalyses the reaction 7-aminomethyl-7-carbaguanosine(34) in tRNA + S-adenosyl-L-methionine = epoxyqueuosine(34) in tRNA + adenine + L-methionine + 2 H(+). Its pathway is tRNA modification; tRNA-queuosine biosynthesis. In terms of biological role, transfers and isomerizes the ribose moiety from AdoMet to the 7-aminomethyl group of 7-deazaguanine (preQ1-tRNA) to give epoxyqueuosine (oQ-tRNA). The protein is S-adenosylmethionine:tRNA ribosyltransferase-isomerase of Acidithiobacillus ferrooxidans (strain ATCC 53993 / BNL-5-31) (Leptospirillum ferrooxidans (ATCC 53993)).